The sequence spans 491 residues: Cysteine--tRNA ligase (491 aa).

Residue cysteine 29 participates in Zn(2+) binding. A 'HIGH' region motif is present at residues 31-41; sequence PTVYDFAHIGN. The Zn(2+) site is built by cysteine 227, histidine 252, and glutamate 256. Positions 285–289 match the 'KMSKS' region motif; the sequence is KMSKS. Lysine 288 is an ATP binding site.

Belongs to the class-I aminoacyl-tRNA synthetase family. In terms of assembly, monomer. Zn(2+) is required as a cofactor.

The protein resides in the cytoplasm. The catalysed reaction is tRNA(Cys) + L-cysteine + ATP = L-cysteinyl-tRNA(Cys) + AMP + diphosphate. The polypeptide is Cysteine--tRNA ligase (Rhodopseudomonas palustris (strain TIE-1)).